The following is a 369-amino-acid chain: UPF0324 membrane protein DVU_0543 (369 aa).

A run of 9 helical transmembrane segments spans residues 13-31 (IVPG…RTYV), 46-65 (WLVQ…TGMF), 110-132 (GGVA…MWLG), 142-164 (TATM…APGV), 171-193 (LALS…PFIG), 240-262 (WNVV…YWKG), 269-291 (TSLG…GMTA), 306-328 (LHLM…GAYI), and 341-363 (LRIG…LAFI).

This sequence belongs to the UPF0324 family.

The protein resides in the cell membrane. This Nitratidesulfovibrio vulgaris (strain ATCC 29579 / DSM 644 / CCUG 34227 / NCIMB 8303 / VKM B-1760 / Hildenborough) (Desulfovibrio vulgaris) protein is UPF0324 membrane protein DVU_0543.